Reading from the N-terminus, the 84-residue chain is Serine palmitoyltransferase-regulating protein TSC3 (84 aa).

Residues 63–83 (LHTIFLVVVSLSLFGLLKYIF) form a helical membrane-spanning segment.

The protein resides in the endoplasmic reticulum membrane. Stimulates the activity of serine palmitoyltransferase (SPT), and thus plays a role in the biosynthesis of sphingolipids. This chain is Serine palmitoyltransferase-regulating protein TSC3 (TSC3), found in Kluyveromyces lactis (strain ATCC 8585 / CBS 2359 / DSM 70799 / NBRC 1267 / NRRL Y-1140 / WM37) (Yeast).